Reading from the N-terminus, the 330-residue chain is Inactive serine protease 45 (330 aa).

An N-terminal signal peptide occupies residues 1–35 (MATSLRLLDAGPGSLRRWIPTCFAALLLLPPRPNL). The Peptidase S1 domain occupies 45-291 (VCGAPWWSDS…YTGWIKEQVS (247 aa)). 4 cysteine pairs are disulfide-bonded: cysteine 75/cysteine 91, cysteine 172/cysteine 249, cysteine 207/cysteine 230, and cysteine 239/cysteine 267. A glycan (N-linked (GlcNAc...) asparagine) is linked at asparagine 272.

This sequence belongs to the peptidase S1 family.

The protein resides in the secreted. The protein is Inactive serine protease 45 (Prss45) of Rattus norvegicus (Rat).